A 161-amino-acid polypeptide reads, in one-letter code: S-ribosylhomocysteine lyase (161 aa).

Fe cation contacts are provided by histidine 57, histidine 61, and cysteine 127.

This sequence belongs to the LuxS family. In terms of assembly, homodimer. Requires Fe cation as cofactor.

The enzyme catalyses S-(5-deoxy-D-ribos-5-yl)-L-homocysteine = (S)-4,5-dihydroxypentane-2,3-dione + L-homocysteine. Its function is as follows. Involved in the synthesis of autoinducer 2 (AI-2) which is secreted by bacteria and is used to communicate both the cell density and the metabolic potential of the environment. The regulation of gene expression in response to changes in cell density is called quorum sensing. Catalyzes the transformation of S-ribosylhomocysteine (RHC) to homocysteine (HC) and 4,5-dihydroxy-2,3-pentadione (DPD). In Streptococcus equi subsp. equi (strain 4047), this protein is S-ribosylhomocysteine lyase.